The primary structure comprises 133 residues: Small ribosomal subunit protein uS9 (133 aa).

The segment at 111 to 133 is disordered; that stretch reads PRRSESKKFGGPGARARKQKSYR.

Belongs to the universal ribosomal protein uS9 family.

The protein is Small ribosomal subunit protein uS9 of Methanosphaera stadtmanae (strain ATCC 43021 / DSM 3091 / JCM 11832 / MCB-3).